The primary structure comprises 184 residues: Ribosome maturation factor RimM (184 aa).

In terms of domain architecture, PRC barrel spans 111 to 184 (DDEFYWVDLI…HIVVDWGLDY (74 aa)).

Belongs to the RimM family. Binds ribosomal protein uS19.

Its subcellular location is the cytoplasm. Its function is as follows. An accessory protein needed during the final step in the assembly of 30S ribosomal subunit, possibly for assembly of the head region. Essential for efficient processing of 16S rRNA. May be needed both before and after RbfA during the maturation of 16S rRNA. It has affinity for free ribosomal 30S subunits but not for 70S ribosomes. The chain is Ribosome maturation factor RimM from Ralstonia nicotianae (strain ATCC BAA-1114 / GMI1000) (Ralstonia solanacearum).